Here is a 134-residue protein sequence, read N- to C-terminus: MAARVCCQLDPARDVLCLRPVGAESRGRPVSGPFGPLPSPSSSAVPADHGAHLSLRGLPVCAFSSAEPCALRLTSARRMETTVNAHQVLPKVLHKRTLGLSAMSTTDLEAYFKDCLFKDWEELGEEIRLKVWRL.

Residues 25–48 (SRGRPVSGPFGPLPSPSSSAVPAD) are disordered. Positions 29–47 (PVSGPFGPLPSPSSSAVPA) are enriched in low complexity. Positions 68 to 117 (PCALRLTSARRMETTVNAHQVLPKVLHKRTLGLSAMSTTDLEAYFKDCLF) are mitochondrial targeting sequence.

This sequence belongs to the orthohepadnavirus protein X family. May form homodimer. May interact with host CEBPA, CFLAR, CREB1, DDB1, E4F1, HBXIP, HSPD1/HSP60, NFKBIA, POLR2E and SMAD4. Interacts with host SMC5-SMC6 complex and induces its degradation. Interacts with host TRPC4AP; leading to prevent ubiquitination of TRPC4AP. Interacts with host PLSCR1; this interaction promotes ubiquitination and degradation of HBx and impairs HBx-mediated cell proliferation. A fraction may be phosphorylated in insect cells and HepG2 cells, a human hepatoblastoma cell line. Phosphorylated in vitro by host protein kinase C or mitogen-activated protein kinase. N-acetylated in insect cells.

It localises to the host cytoplasm. It is found in the host nucleus. The protein localises to the host mitochondrion. Its function is as follows. Multifunctional protein that plays a role in silencing host antiviral defenses and promoting viral transcription. Does not seem to be essential for HBV infection. May be directly involved in development of cirrhosis and liver cancer (hepatocellular carcinoma). Most of cytosolic activities involve modulation of cytosolic calcium. The effect on apoptosis is controversial depending on the cell types in which the studies have been conducted. May induce apoptosis by localizing in mitochondria and causing loss of mitochondrial membrane potential. May also modulate apoptosis by binding host CFLAR, a key regulator of the death-inducing signaling complex (DISC). Promotes viral transcription by using the host E3 ubiquitin ligase DDB1 to target the SMC5-SMC6 complex to proteasomal degradation. This host complex would otherwise bind to viral episomal DNA, and prevents its transcription. Moderately stimulates transcription of many different viral and cellular transcription elements. Promoters and enhancers stimulated by HBx contain DNA binding sites for NF-kappa-B, AP-1, AP-2, c-EBP, ATF/CREB, or the calcium-activated factor NF-AT. The polypeptide is Protein X (Homo sapiens (Human)).